Consider the following 383-residue polypeptide: Cell division protein FtsZ (383 aa).

GTP contacts are provided by residues 20 to 24 (GGGGN), 107 to 109 (GTG), E138, R142, and N186.

Belongs to the FtsZ family. As to quaternary structure, homodimer. Polymerizes to form a dynamic ring structure in a strictly GTP-dependent manner. Interacts directly with several other division proteins.

It localises to the cytoplasm. In terms of biological role, essential cell division protein that forms a contractile ring structure (Z ring) at the future cell division site. The regulation of the ring assembly controls the timing and the location of cell division. One of the functions of the FtsZ ring is to recruit other cell division proteins to the septum to produce a new cell wall between the dividing cells. Binds GTP and shows GTPase activity. The sequence is that of Cell division protein FtsZ from Escherichia coli O157:H7.